Reading from the N-terminus, the 173-residue chain is Small ribosomal subunit protein uS7 (173 aa).

Belongs to the universal ribosomal protein uS7 family. Part of the 30S ribosomal subunit. Contacts proteins S9 and S11.

Its function is as follows. One of the primary rRNA binding proteins, it binds directly to 16S rRNA where it nucleates assembly of the head domain of the 30S subunit. Is located at the subunit interface close to the decoding center, probably blocks exit of the E-site tRNA. The protein is Small ribosomal subunit protein uS7 of Orientia tsutsugamushi (strain Boryong) (Rickettsia tsutsugamushi).